Here is a 167-residue protein sequence, read N- to C-terminus: Peptide deformylase (167 aa).

C91 and H133 together coordinate Fe cation. E134 is a catalytic residue. H137 contributes to the Fe cation binding site.

It belongs to the polypeptide deformylase family. It depends on Fe(2+) as a cofactor.

The enzyme catalyses N-terminal N-formyl-L-methionyl-[peptide] + H2O = N-terminal L-methionyl-[peptide] + formate. Functionally, removes the formyl group from the N-terminal Met of newly synthesized proteins. Requires at least a dipeptide for an efficient rate of reaction. N-terminal L-methionine is a prerequisite for activity but the enzyme has broad specificity at other positions. The sequence is that of Peptide deformylase from Buchnera aphidicola subsp. Schizaphis graminum (strain Sg).